The chain runs to 622 residues: Palmitoyltransferase pfa3 (622 aa).

At 1–38 (MDATPYTTSSTSTALDSPSSLSATMARRWARKLERYCC) the chain is on the cytoplasmic side. A helical transmembrane segment spans residues 39 to 59 (TCVTYFPLAFVYSMTSWAAYV). The Vacuolar segment spans residues 60-76 (DVSLSTTPSRVTWLGHS). Residues 77–97 (YGFIAVVLYLLANWCYTYAVF) form a helical membrane-spanning segment. The Cytoplasmic portion of the chain corresponds to 98-175 (TSPGSTTNEY…ATCVGLRNHK (78 aa)). Residues 132-182 (RFCKKCQARKPDRAHHCSTCRRCVLKMDHHCPWLATCVGLRNHKAFLLFLI) enclose the DHHC domain. The helical transmembrane segment at 176-196 (AFLLFLIYTSVFCWVSFAGSA) threads the bilayer. Over 197 to 217 (SWVWEEIMSNTTYVETLMPVN) the chain is Vacuolar. The helical transmembrane segment at 218–238 (YIMLSVISGIIGIVLSAFCGW) threads the bilayer. Topologically, residues 239–622 (HIYLASRGQT…EGRSNDDGVD (384 aa)) are cytoplasmic. Disordered stretches follow at residues 298–334 (PGVT…ELQA), 419–507 (REEQ…YADD), and 533–622 (DDVL…DGVD). Residues 302-311 (RPEEGEEMRR) are compositionally biased toward basic and acidic residues. The span at 313-330 (TTPSGSSQRNDLASQHNP) shows a compositional bias: polar residues. Residues 419 to 428 (REEQRQRERQ) show a composition bias toward basic and acidic residues. Residues 443 to 455 (YTPTWTPPNQQHP) are compositionally biased toward polar residues. The segment covering 466-488 (PSSQPQTQRNSNSSSPSFTPSRR) has biased composition (low complexity). Over residues 533–547 (DDVLNDDDDDDEDYF) the composition is skewed to acidic residues. Basic and acidic residues predominate over residues 610–622 (NGEEGRSNDDGVD).

The protein belongs to the DHHC palmitoyltransferase family. PFA3 subfamily. Post-translationally, autopalmitoylated.

It localises to the vacuole membrane. The catalysed reaction is L-cysteinyl-[protein] + hexadecanoyl-CoA = S-hexadecanoyl-L-cysteinyl-[protein] + CoA. Its function is as follows. Palmitoyltransferase specific for vac8. Palmitoylates vac8 at one or more of its N-terminal cysteine residues, which is required for its proper membrane localization. This chain is Palmitoyltransferase pfa3 (ptr-3), found in Neurospora crassa (strain ATCC 24698 / 74-OR23-1A / CBS 708.71 / DSM 1257 / FGSC 987).